A 95-amino-acid chain; its full sequence is Integration host factor subunit alpha (95 aa).

Positions 51–71 (NFDLRDKNERPGRNPKTGEDI) are disordered. The span at 53 to 69 (DLRDKNERPGRNPKTGE) shows a compositional bias: basic and acidic residues.

Belongs to the bacterial histone-like protein family. In terms of assembly, heterodimer of an alpha and a beta chain.

In terms of biological role, this protein is one of the two subunits of integration host factor, a specific DNA-binding protein that functions in genetic recombination as well as in transcriptional and translational control. The polypeptide is Integration host factor subunit alpha (Vibrio vulnificus (strain CMCP6)).